We begin with the raw amino-acid sequence, 400 residues long: Phosphoglycerate kinase (400 aa).

Substrate is bound by residues 23-25 (DLN), arginine 38, 61-64 (HFGR), arginine 120, and arginine 153. Residues lysine 203, glutamate 325, and 355–358 (GGDT) contribute to the ATP site.

This sequence belongs to the phosphoglycerate kinase family. Monomer.

The protein resides in the cytoplasm. The enzyme catalyses (2R)-3-phosphoglycerate + ATP = (2R)-3-phospho-glyceroyl phosphate + ADP. It functions in the pathway carbohydrate degradation; glycolysis; pyruvate from D-glyceraldehyde 3-phosphate: step 2/5. This chain is Phosphoglycerate kinase, found in Agrobacterium fabrum (strain C58 / ATCC 33970) (Agrobacterium tumefaciens (strain C58)).